A 160-amino-acid polypeptide reads, in one-letter code: Crossover junction endodeoxyribonuclease RuvC (160 aa).

Residues Asp-7, Glu-67, and Asp-138 contribute to the active site. Residues Asp-7, Glu-67, and Asp-138 each coordinate Mg(2+).

This sequence belongs to the RuvC family. In terms of assembly, homodimer which binds Holliday junction (HJ) DNA. The HJ becomes 2-fold symmetrical on binding to RuvC with unstacked arms; it has a different conformation from HJ DNA in complex with RuvA. In the full resolvosome a probable DNA-RuvA(4)-RuvB(12)-RuvC(2) complex forms which resolves the HJ. Mg(2+) is required as a cofactor.

Its subcellular location is the cytoplasm. It catalyses the reaction Endonucleolytic cleavage at a junction such as a reciprocal single-stranded crossover between two homologous DNA duplexes (Holliday junction).. The RuvA-RuvB-RuvC complex processes Holliday junction (HJ) DNA during genetic recombination and DNA repair. Endonuclease that resolves HJ intermediates. Cleaves cruciform DNA by making single-stranded nicks across the HJ at symmetrical positions within the homologous arms, yielding a 5'-phosphate and a 3'-hydroxyl group; requires a central core of homology in the junction. The consensus cleavage sequence is 5'-(A/T)TT(C/G)-3'. Cleavage occurs on the 3'-side of the TT dinucleotide at the point of strand exchange. HJ branch migration catalyzed by RuvA-RuvB allows RuvC to scan DNA until it finds its consensus sequence, where it cleaves and resolves the cruciform DNA. This Brachyspira hyodysenteriae (strain ATCC 49526 / WA1) protein is Crossover junction endodeoxyribonuclease RuvC.